We begin with the raw amino-acid sequence, 111 residues long: Anti-adapter protein IraM (111 aa).

Belongs to the IraM/RssC family.

Its subcellular location is the cytoplasm. Inhibits RpoS proteolysis by regulating RssB activity, thereby increasing the stability of the sigma stress factor RpoS during magnesium starvation. The chain is Anti-adapter protein IraM from Escherichia coli O127:H6 (strain E2348/69 / EPEC).